Reading from the N-terminus, the 479-residue chain is Aryl-phospho-beta-D-glucosidase BglA (479 aa).

The active-site Proton donor is Glu176. The active-site Nucleophile is the Glu377.

It belongs to the glycosyl hydrolase 1 family.

It catalyses the reaction 6-phospho-beta-D-glucosyl-(1-&gt;4)-D-glucose + H2O = D-glucose 6-phosphate + D-glucose. In terms of biological role, catalyzes the hydrolysis of aryl-phospho-beta-D-glucosides such as 4-methylumbelliferyl-phospho-beta-D-glucopyranoside (MUG-P), phosphoarbutin and phosphosalicin. Plays a major role in the utilization of arbutin or salicin as the sole carbon source. BglA and BglH are the major proteins contributing to hydrolysis of MUG-P by extracts of late-exponential-phase or stationary-phase B.subtilis cells. The chain is Aryl-phospho-beta-D-glucosidase BglA (bglA) from Bacillus subtilis (strain 168).